The chain runs to 399 residues: 3-methyl-2-oxobutanoate hydroxymethyltransferase 2, mitochondrial (399 aa).

A mitochondrion-targeting transit peptide spans methionine 1–arginine 90. Mg(2+) is bound by residues aspartate 125 and aspartate 164. Residues aspartate 125–serine 126, aspartate 164, and lysine 194 each bind 3-methyl-2-oxobutanoate. Residue glutamate 196 participates in Mg(2+) binding. Glutamate 264 (proton acceptor) is an active-site residue.

This sequence belongs to the PanB family. Mg(2+) is required as a cofactor.

It is found in the mitochondrion. It catalyses the reaction 3-methyl-2-oxobutanoate + (6R)-5,10-methylene-5,6,7,8-tetrahydrofolate + H2O = 2-dehydropantoate + (6S)-5,6,7,8-tetrahydrofolate. It participates in cofactor biosynthesis; (R)-pantothenate biosynthesis; (R)-pantoate from 3-methyl-2-oxobutanoate: step 1/2. In terms of biological role, catalyzes the reversible reaction in which hydroxymethyl group from 5,10-methylenetetrahydrofolate is transferred onto alpha-ketoisovalerate to form ketopantoate. This is 3-methyl-2-oxobutanoate hydroxymethyltransferase 2, mitochondrial (KPHMT2) from Oryza sativa subsp. japonica (Rice).